The sequence spans 1268 residues: MSSVAVLTQESFAEHRSGLVPQQIKVATLNSEEESDPPTYKDAFPPLPEKAACLESAQEPAGAWGNKIRPIKASVITQVFHVPLEERKYKDMNQFGEGEQAKICLEIMQRTGAHLELSLAKDQGLSIMVSGKLDAVMKARKDIVARLQTQASATVAIPKEHHRFVIGKNGEKLQDLELKTATKIQIPRPDDPSNQIKITGTKEGIEKARHEVLLISAEQDERAVERLEVEKAFHPFIAGPYNRLVGEIMQETGTRINIPPPSVNRTEIVFTGEKEQLAQAVARIKKIYEEKKKKTTTIAVEVKKSQHKYVIGPKGNSLQEILERTGVSVEIPPSDSISETVILRGEPEKLGQALTEVYAKANSFTVSSVAAPSWLHRFIIGKKGQNLAKITQQMPKVHIEFTEGEDKITLEGPTEDVSVTQEHIEGMVKDLINRMDYVEINIDHKFHRHLIGKSGANINRIKDQYKVSVRIPPDSEKSNLIRIEGDPQGVQQAKRELLELASRMENERTKDLIIEQRFHRTIIGQKGERIREIRDKFPEVIINFPDPAQKSDIVQLRGPKNEVEKCTKYMQKMVADLVENSYSISVPIFKQFHKNIIGKGGANIKKIREESNTKIDLPAENSNSETIIITGKRANCEAARSRILSIQKDLANIAEVEVSIPAKLHNSLIGTKGRLIRSIMEECGGVHIHFPVEGSGSDTVVIRGPSSDVEKAKKQLLHLAEEKQTKSFTVDIRAKPEYHKFLIGKGGGKIRKVRDSTGARVIFPAAEDKDQDLITIIGKEDAVREAQKELEALIQNLDNVVEDSMLVDPKHHRHFVIRRGQVLREIAEEYGGVMVSFPRSGTQSDKVTLKGAKGCVEAAKKRIQEIIEDLEAQVTLECAIPQKFHRSVMGPKGSRIQQITRDFSVQIKFPDREENPVHSTEPAVQENGDEAGEGREAKDSDPGSPRRCDIIIISGRKEKCEAAKEALEALVPVTVEVEVPFDLHRYVIGQKGSGIRKMMDEFEVNIHVPAPELQSDIIAITGLAANLDRAKAGLLERVKELQAEQEDRALRSFKLSVTVDPKYHPKIIGRKGAVITQIRLEHDVNIQFPDKGDGNQPQDQITITGYEKNTEAARDAILRIVGELEQMVSEDVPLDHRVHARIIGARGKAIRKIMDEFKVDIRFPQSGAPDPNCVTVTGLPENVEEAIDHILNLEEEYLADVVDSEALQVYMKPPVHEEAKAPSRGFVVRDAPWAASSSEKAPDMSSSEEFPSFGAQVAPKTLPWGPKR.

Residue serine 2 is modified to N-acetylserine. Threonine 8 is modified (phosphothreonine). Residues serine 11, serine 31, and serine 35 each carry the phosphoserine modification. KH domains lie at 158 to 229 (PKEH…RLEV), 230 to 302 (EKAF…AVEV), 303 to 371 (KKSQ…SVAA), 372 to 442 (PSWL…EINI), 443 to 514 (DHKF…DLII), 515 to 588 (EQRF…SVPI), 589 to 660 (FKQF…EVSI), 661 to 734 (PAKL…DIRA), 735 to 807 (KPEY…SMLV), 808 to 880 (DPKH…ECAI), 881 to 979 (PQKF…EVEV), 980 to 1059 (PFDL…SVTV), 1060 to 1134 (DPKY…DVPL), and 1135 to 1209 (DHRV…ALQV). Threonine 295 and threonine 296 each carry phosphothreonine. Serine 317 carries the post-translational modification Phosphoserine. A Phosphotyrosine modification is found at tyrosine 437. Serine 645 carries the phosphoserine modification. A disordered region spans residues 910 to 947 (PDREENPVHSTEPAVQENGDEAGEGREAKDSDPGSPRR). Positions 932-947 (GEGREAKDSDPGSPRR) are enriched in basic and acidic residues. Lysine 991 is modified (N6-acetyllysine). A compositionally biased stretch (polar residues) spans 1237–1249 (SSEKAPDMSSSEE). Residues 1237–1268 (SSEKAPDMSSSEEFPSFGAQVAPKTLPWGPKR) are disordered. 2 positions are modified to phosphoserine: serine 1247 and serine 1252.

It localises to the cytoplasm. It is found in the nucleus. Appears to play a role in cell sterol metabolism. It may function to protect cells from over-accumulation of cholesterol. This Pongo abelii (Sumatran orangutan) protein is Vigilin (HDLBP).